The following is a 644-amino-acid chain: Archaeal Lon protease (644 aa).

Over residues 1–18 (MKTTIKNSRTQESVSYEG) the composition is skewed to polar residues. The interval 1–30 (MKTTIKNSRTQESVSYEGNETKKGTGETLS) is disordered. The Cytoplasmic segment spans residues 1-137 (MKTTIKNSRT…KARSQDEKKN (137 aa)). 71–78 (GEPGVGKS) contacts ATP. The next 2 membrane-spanning stretches (helical) occupy residues 138–155 (LFMMLIISFILVLGFMMN) and 156–171 (QFLAAIIAAGIIFLAL). At 172 to 644 (QQFRPRTTVM…PSIMKKPAMH (473 aa)) the chain is on the cytoplasmic side. Residues 438-617 (GGEVGRVNGL…GDVLEHALIG (180 aa)) form the Lon proteolytic domain. Residues Ser524 and Lys567 contribute to the active site.

This sequence belongs to the peptidase S16 family. Archaeal LonB subfamily. As to quaternary structure, homohexamer. Organized in a ring with a central cavity.

The protein resides in the cell membrane. ATP-dependent serine protease that mediates the selective degradation of mutant and abnormal proteins as well as certain short-lived regulatory proteins. Degrades polypeptides processively. The polypeptide is Archaeal Lon protease (Methanothermobacter thermautotrophicus (strain ATCC 29096 / DSM 1053 / JCM 10044 / NBRC 100330 / Delta H) (Methanobacterium thermoautotrophicum)).